The chain runs to 255 residues: EEF1A lysine methyltransferase 4 (255 aa).

2 residues coordinate S-adenosyl-L-methionine: Trp-26 and Tyr-30. Phosphotyrosine is present on Tyr-39. S-adenosyl-L-methionine-binding positions include Trp-41, Gly-66, 88 to 89, 113 to 114, and Lys-130; these read DY and DV. The Required for methyltransferase activity signature appears at 129-134; the sequence is EKGTLD.

This sequence belongs to the methyltransferase superfamily.

It carries out the reaction L-lysyl-[protein] + S-adenosyl-L-methionine = N(6)-methyl-L-lysyl-[protein] + S-adenosyl-L-homocysteine + H(+). The enzyme catalyses N(6)-methyl-L-lysyl-[protein] + S-adenosyl-L-methionine = N(6),N(6)-dimethyl-L-lysyl-[protein] + S-adenosyl-L-homocysteine + H(+). It catalyses the reaction N(6),N(6)-dimethyl-L-lysyl-[protein] + S-adenosyl-L-methionine = N(6),N(6),N(6)-trimethyl-L-lysyl-[protein] + S-adenosyl-L-homocysteine + H(+). Functionally, protein-lysine methyltransferase that efficiently catalyzes three successive methylations on 'Lys-36' in eukaryotic translation elongation factor 1 alpha (EEF1A1 or EEF1A2). The polypeptide is EEF1A lysine methyltransferase 4 (Bos taurus (Bovine)).